The following is a 705-amino-acid chain: DNA ligase (705 aa).

Residues 42–46 (DADFD), 91–92 (SL), and Glu125 contribute to the NAD(+) site. The active-site N6-AMP-lysine intermediate is Lys127. NAD(+) is bound by residues Arg148, Glu183, Lys299, and Lys323. Positions 428, 431, 446, and 452 each coordinate Zn(2+). Residues 626-705 (TDGSPVAGKT…DGWLALIEGL (80 aa)) enclose the BRCT domain.

The protein belongs to the NAD-dependent DNA ligase family. LigA subfamily. Requires Mg(2+) as cofactor. It depends on Mn(2+) as a cofactor.

The catalysed reaction is NAD(+) + (deoxyribonucleotide)n-3'-hydroxyl + 5'-phospho-(deoxyribonucleotide)m = (deoxyribonucleotide)n+m + AMP + beta-nicotinamide D-nucleotide.. DNA ligase that catalyzes the formation of phosphodiester linkages between 5'-phosphoryl and 3'-hydroxyl groups in double-stranded DNA using NAD as a coenzyme and as the energy source for the reaction. It is essential for DNA replication and repair of damaged DNA. This is DNA ligase from Roseobacter denitrificans (strain ATCC 33942 / OCh 114) (Erythrobacter sp. (strain OCh 114)).